The following is a 62-amino-acid chain: U10-buthitoxin-Hj1a (62 aa).

The first 22 residues, 1-22 (MQKIFIILVLFCILKFNVDVEG), serve as a signal peptide directing secretion. Intrachain disulfides connect cysteine 28-cysteine 46, cysteine 33-cysteine 59, and cysteine 37-cysteine 61.

This sequence belongs to the short scorpion toxin superfamily. Potassium channel inhibitor family. Alpha-KTx 23 subfamily. As to expression, expressed by the venom gland.

Its subcellular location is the secreted. May block potassium channels. This Hottentotta judaicus (Black scorpion) protein is U10-buthitoxin-Hj1a.